The sequence spans 302 residues: Methionyl-tRNA formyltransferase (302 aa).

108–111 serves as a coordination point for (6S)-5,6,7,8-tetrahydrofolate; sequence SLLP. The span at 276–288 shows a compositional bias: basic and acidic residues; it reads REGKRPMEPEEFL. The interval 276 to 302 is disordered; sequence REGKRPMEPEEFLRGFPLPEGSRAHTA.

This sequence belongs to the Fmt family.

The enzyme catalyses L-methionyl-tRNA(fMet) + (6R)-10-formyltetrahydrofolate = N-formyl-L-methionyl-tRNA(fMet) + (6S)-5,6,7,8-tetrahydrofolate + H(+). In terms of biological role, attaches a formyl group to the free amino group of methionyl-tRNA(fMet). The formyl group appears to play a dual role in the initiator identity of N-formylmethionyl-tRNA by promoting its recognition by IF2 and preventing the misappropriation of this tRNA by the elongation apparatus. The protein is Methionyl-tRNA formyltransferase of Cereibacter sphaeroides (strain ATCC 17029 / ATH 2.4.9) (Rhodobacter sphaeroides).